We begin with the raw amino-acid sequence, 188 residues long: SLRKTVQDLLVQLQEAERQHQSERVDFEATLSRYQREAEQSHVALQRAEDRVEQKEAEVEELQKRLLGMETEHQALLAKVREGVTALEELRGKNSDCRAEQEKAANLEKEVAGLREKIHHLDDMLKSQQRKVRQMIEQLQNSKTVIQSKDTAIQELKEKIAYLEAENLEMHDRMEHLIEKQISHGNFS.

A coiled-coil region spans residues 1–181 (SLRKTVQDLL…DRMEHLIEKQ (181 aa)).

The protein belongs to the tuftelin family. As to quaternary structure, interacts with TFIP11.

The protein resides in the secreted. Functionally, involved in the structural organization of the epidermis. Involved in the mineralization and structural organization of enamel. This is Tuftelin (TUFT1) from Sus scrofa (Pig).